A 205-amino-acid chain; its full sequence is Ras-related and estrogen-regulated growth inhibitor-like protein (205 aa).

The small GTPase-like stretch occupies residues 1 to 205 (MSNFLHLKYN…NVFGKRRKSV (205 aa)). GTP-binding positions include 11–18 (EKSVSVTK), 58–64 (DPCSQTQ), and 123–126 (NKRD).

This sequence belongs to the small GTPase superfamily. Ras family.

The enzyme catalyses GTP + H2O = GDP + phosphate + H(+). Its function is as follows. Binds GDP/GTP and may possess intrinsic GTPase activity. This is Ras-related and estrogen-regulated growth inhibitor-like protein (RERGL) from Homo sapiens (Human).